The chain runs to 59 residues: Large ribosomal subunit protein bL35 (59 aa).

Disordered regions lie at residues 1 to 22 (MKVK…IKRK) and 30 to 49 (APHK…TVSA). Basic residues predominate over residues 30–43 (APHKTTKQKRHLRK).

It belongs to the bacterial ribosomal protein bL35 family.

This Mycoplasma pneumoniae (strain ATCC 29342 / M129 / Subtype 1) (Mycoplasmoides pneumoniae) protein is Large ribosomal subunit protein bL35 (rpmI).